Consider the following 274-residue polypeptide: uncharacterized protein (274 aa).

Positions 1–19 are cleaved as a signal peptide; that stretch reads MKRINKVLLSLLCLVIAYA.

This is an uncharacterized protein from Rickettsia prowazekii (strain Madrid E).